Consider the following 140-residue polypeptide: Transcription antitermination protein NusB (140 aa).

Belongs to the NusB family.

Involved in transcription antitermination. Required for transcription of ribosomal RNA (rRNA) genes. Binds specifically to the boxA antiterminator sequence of the ribosomal RNA (rrn) operons. The polypeptide is Transcription antitermination protein NusB (Streptococcus pneumoniae serotype 2 (strain D39 / NCTC 7466)).